Consider the following 797-residue polypeptide: Xaa-Pro dipeptidyl-peptidase (797 aa).

Catalysis depends on charge relay system residues Ser370, Asp490, and His521.

It belongs to the peptidase S15 family. In terms of assembly, homodimer.

It is found in the cytoplasm. It carries out the reaction Hydrolyzes Xaa-Pro-|- bonds to release unblocked, N-terminal dipeptides from substrates including Ala-Pro-|-p-nitroanilide and (sequentially) Tyr-Pro-|-Phe-Pro-|-Gly-Pro-|-Ile.. In terms of biological role, removes N-terminal dipeptides sequentially from polypeptides having unsubstituted N-termini provided that the penultimate residue is proline. The protein is Xaa-Pro dipeptidyl-peptidase of Lacticaseibacillus paracasei (strain ATCC 334 / BCRC 17002 / CCUG 31169 / CIP 107868 / KCTC 3260 / NRRL B-441) (Lactobacillus paracasei).